The primary structure comprises 543 residues: Hydroxylamine reductase (543 aa).

Positions 3, 6, 15, and 21 each coordinate [4Fe-4S] cluster. Positions 239, 263, 307, 398, 426, 451, 486, and 488 each coordinate hybrid [4Fe-2O-2S] cluster. Cys398 is modified (cysteine persulfide).

It belongs to the HCP family. Requires [4Fe-4S] cluster as cofactor. It depends on hybrid [4Fe-2O-2S] cluster as a cofactor.

It is found in the cytoplasm. The catalysed reaction is A + NH4(+) + H2O = hydroxylamine + AH2 + H(+). In terms of biological role, catalyzes the reduction of hydroxylamine to form NH(3) and H(2)O. The polypeptide is Hydroxylamine reductase (Methanococcus vannielii (strain ATCC 35089 / DSM 1224 / JCM 13029 / OCM 148 / SB)).